Here is a 138-residue protein sequence, read N- to C-terminus: Putative membrane protein insertion efficiency factor (138 aa).

The interval 71 to 138 is disordered; that stretch reads YDPVPGTPEA…GTPSHTRGEN (68 aa). Residues 81–113 show a composition bias toward basic and acidic residues; sequence RQWRELHPETARSKNEPIHDLTDDNPRDHEPAL. Residues 123–138 are compositionally biased toward polar residues; sequence PGSTHTGTPSHTRGEN.

The protein belongs to the UPF0161 family.

The protein localises to the cell membrane. Its function is as follows. Could be involved in insertion of integral membrane proteins into the membrane. The chain is Putative membrane protein insertion efficiency factor from Cutibacterium acnes (strain DSM 16379 / KPA171202) (Propionibacterium acnes).